Here is a 636-residue protein sequence, read N- to C-terminus: LDL receptor repeat-containing protein egg-1 (636 aa).

The Cytoplasmic segment spans residues 1-130; that stretch reads MSSIAQKNRN…NHSNLFQCPS (130 aa). A helical; Signal-anchor for type II membrane protein transmembrane segment spans residues 131–151; that stretch reads VAIVLVLALVILGVLAAIPLT. Topologically, residues 152–636 are extracellular; it reads LMLTSSAQKM…VLKNSGRFPY (485 aa). Asn-202 is a glycosylation site (N-linked (GlcNAc...) asparagine). 8 LDL-receptor class A domains span residues 205–243, 244–296, 298–335, 336–375, 378–415, 457–499, 503–541, and 542–579; these read TCSG…ENCK, ECQS…AMCK, TCSK…NNCN, KCQK…QQCD, TCSG…ENCP, KCHP…KNCT, ECGI…QNCS, and QCAS…LKCS. Disulfide bonds link Cys-213/Cys-233, Cys-227/Cys-242, Cys-245/Cys-273, Cys-251/Cys-286, Cys-280/Cys-295, Cys-299/Cys-312, Cys-306/Cys-325, Cys-319/Cys-334, Cys-337/Cys-365, Cys-359/Cys-374, Cys-379/Cys-392, Cys-387/Cys-405, Cys-399/Cys-414, Cys-458/Cys-476, Cys-466/Cys-489, Cys-483/Cys-498, Cys-504/Cys-518, Cys-514/Cys-531, Cys-525/Cys-540, Cys-543/Cys-556, Cys-550/Cys-569, and Cys-563/Cys-578. Asn-508 is a glycosylation site (N-linked (GlcNAc...) asparagine). Asn-614 is a glycosylation site (N-linked (GlcNAc...) asparagine).

It is found in the cell membrane. In terms of biological role, probable receptor which is required for the oocyte-to-zygote transition although its exact function is controversial. Seems to be required for fertilization probably by promoting the interaction or fusion between sperm and oocyte. Conversely, shown to be dispensable for fertilization but required for the formation of a continuous and cohesive eggshell chitin layer by maintaining a homogenous distribution of chitin synthase chs-1 at the unfertilized oocyte cell membrane. Appears to recruit or maintain together to the unfertilized oocyte cortex several proteins including chs-1, kinase mbk-2 and pseudophosphatases egg-3, and possibly egg-4 and egg-5. The protein is LDL receptor repeat-containing protein egg-1 of Caenorhabditis briggsae.